Consider the following 81-residue polypeptide: MKTLLLTLVVVTVVCLDFGHTMICYNQQSSQPPTTTTCSEGQCYKKTWSDHRGTIIERGCACPNVKPGVKISCCSSDKCNG.

The N-terminal stretch at 1–21 is a signal peptide; it reads MKTLLLTLVVVTVVCLDFGHT. Cystine bridges form between C24/C43, C38/C60, C62/C73, and C74/C79.

Belongs to the three-finger toxin family. Short-chain subfamily. Type I alpha-neurotoxin sub-subfamily. Expressed by the venom gland.

Its subcellular location is the secreted. Binds to muscle nicotinic acetylcholine receptor (nAChR) and inhibit acetylcholine from binding to the receptor, thereby impairing neuromuscular transmission. The protein is Three-finger toxin MALT0051C of Micrurus altirostris (Uruguayan coral snake).